The primary structure comprises 350 residues: MFMASSLPVFIFLLSLPHGLTFNCTNSGVCIEKMKQHRTEYLKNEILDQLNMKEAPKGLKPMDPEMKSVYLEMYRDLLEKDEQDMGVEMSFYTAKDPSYGENPSQLVAKFDVTNDLERSDILQATLTVSIEIPAKDSGMLQDVQVQVYEKNEDGSMGEMVTSGIFATKGSERISIQLPIDTVKSWFTISPIQGIFVKAMLDGRNVALHPQQTTADVDNMRLQLSTRPKGSRKRRSHAKPVCNAEAQSKGCCLYDLEIEFEKIGWDWIVAPPRYNAYMCRGDCHYNAHHFNLAETGHSKIMRAAHKVSNPEIGYCCHPTEYDYIKLIYVNRDGRVSIANVNGMIAKKCGCS.

The first 21 residues, 1-21 (MFMASSLPVFIFLLSLPHGLT), serve as a signal peptide directing secretion. A propeptide spanning residues 22–234 (FNCTNSGVCI…TRPKGSRKRR (213 aa)) is cleaved from the precursor. N-linked (GlcNAc...) asparagine glycosylation occurs at Asn23. 4 disulfide bridges follow: Cys241/Cys251, Cys250/Cys315, Cys278/Cys347, and Cys282/Cys349.

This sequence belongs to the TGF-beta family. As to expression, expressed in the chemosensory neurons, including in the ASJ neurons in males. Expressed in the ASI neurons.

Its subcellular location is the secreted. In terms of biological role, under harsh environmental conditions, larvae enter a developmentally arrested state known as dauer; TGF-beta-like daf-7 acts to inhibit dauer larva formation and promote growth. May be a ligand to cell surface receptor daf-4. May act as a negative regulator of dauer larva development by transducing chemosensory information from ASI neurons. Involved in sensitivity to CO2 levels. Involved in mate searching behavior of males, acting in concert with the neuropeptide pdf-1. In AWC neurons, acts to promote expression of srsx-3, a member of the GPCR family. This chain is Dauer larva development regulatory growth factor daf-7, found in Caenorhabditis elegans.